A 938-amino-acid polypeptide reads, in one-letter code: Myocardin (938 aa).

The MEF2C-binding signature appears at 12–27; sequence IRRKFRSVLQLRLQQR. RPEL repeat units follow at residues 18–43, 62–87, and 106–131; these read SVLQLRLQQRRTQEQLANQGLIPPLK, DSLRRKVRNRSDRASLVNMHILQAST, and DDLNEKIALRPGPLELVEKNILPMDS. Residues 37 to 64 are disordered; sequence GLIPPLKSPTEFHDPRKKLDSAKTEDSL. The span at 46–64 shows a compositional bias: basic and acidic residues; it reads TEFHDPRKKLDSAKTEDSL. The tract at residues 153-205 is HDAC5-binding; the sequence is FEDDSSRDGLSPDQARSEDPQGSGGSTPDIKSTEAPLAGPLDTIQDLTPGSES. Disordered regions lie at residues 155–282 and 339–381; these read DDSS…PPPM and NEQM…PLPP. Positions 210 to 221 are enriched in polar residues; it reads TASQLSNQSDSG. Basic residues predominate over residues 248–265; sequence NRHKKPKDPKPKVKKLKY. Residues 345–360 are compositionally biased toward low complexity; sequence NPNSSSTPLNNTPLSP. Positions 361–372 are enriched in polar residues; sequence VKNSLSGQTGVS. Residues 383-417 form the SAP domain; sequence LDDLKVSELRQQLRIRGLPVSGTKTALVDRLRPFQ. Phosphoserine; by GSK3-beta is present on residues serine 457, serine 461, serine 465, and serine 469. Positions 501–521 are disordered; sequence ESLLSSLNGGSGPSEPDGLDS. The stretch at 522-566 forms a coiled coil; sequence EKDKMLVEKQKVINQLTWKLRQEQRQVEELRMQLQKQKSGCNDQK. A disordered region spans residues 586-606; that stretch reads AAQQASGKGQGHSSDSPPPAC. Positions 588–600 are enriched in polar residues; it reads QQASGKGQGHSSD. Serine 627, serine 631, serine 635, and serine 639 each carry phosphoserine; by GSK3-beta. Composition is skewed to polar residues over residues 667–694 and 701–713; these read GAQRENHGVSSPNSSQGCAQMTGLQSSD and SIPSPTFPKSSPT. Residues 667 to 734 form a disordered region; the sequence is GAQRENHGVS…DAVKQQMTRS (68 aa). Positions 717-938 are required for interaction with and ubiquitination by STUB1; sequence ITQPPSYEDA…SPMDLHLQQW (222 aa). Phosphoserine; by MAPK1 and MAPK3 occurs at positions 815, 862, and 869. Threonine 896 is modified (phosphothreonine; by MAPK1 and MAPK3).

As to quaternary structure, homodimer. Interacts with MLLT7/FOXO4. Interacts with SRF, its association does not depend on specific DNA sequences for ternary complex formation. Interacts (via C-terminal) with EP300 (via the CREB-binding domain). Interacts with HDAC4 and HDAC5. Interacts with MEF2C. Interacts (via C-terminus) with STUB1/CHIP. Interacts with PURB. Ubiquitinated; by STUB1/CHIP at the C-terminus, leading to its degradation by the proteasome. Phosphorylation by GSK3B is required for STUB1/CHIP-mediated ubiquitination. In terms of processing, phosphorylation negatively regulates transcriptional activity. Phosphorylated; by GSK3B. In terms of tissue distribution, abundantly expressed in the heart, aorta media and bladder, weakly expressed in the stomach, intestine and lung.

The protein localises to the nucleus. Its function is as follows. Smooth muscle cells (SM) and cardiac muscle cells-specific transcriptional factor which uses the canonical single or multiple CArG boxes DNA sequence. Acts as a cofactor of serum response factor (SRF) with the potential to modulate SRF-target genes. Plays a crucial role in cardiogenesis, urinary bladder development, and differentiation of the smooth muscle cell lineage (myogenesis). Positively regulates the transcription of genes involved in vascular smooth muscle contraction. In Rattus norvegicus (Rat), this protein is Myocardin (Myocd).